A 274-amino-acid chain; its full sequence is Undecaprenyl-diphosphatase (274 aa).

Transmembrane regions (helical) follow at residues 40–60 (PGAAFTAVIQIGTEVAVLMFF), 90–110 (WFIIVGSVPIVLLGIALKDVI), 114–134 (FRSLWLIGTTLIVLGLVLGVA), 147–167 (ISLRDAILMGLAQALALIPGV), 190–210 (YAFLLAIPAVIGAGVFELKDI), 221–241 (PTIVATIVSFVVGYAAIAWLL), and 252–272 (FVLYRVALGAATLVLVATGVI).

It belongs to the UppP family.

The protein resides in the cell membrane. It catalyses the reaction di-trans,octa-cis-undecaprenyl diphosphate + H2O = di-trans,octa-cis-undecaprenyl phosphate + phosphate + H(+). In terms of biological role, catalyzes the dephosphorylation of undecaprenyl diphosphate (UPP). Confers resistance to bacitracin. The polypeptide is Undecaprenyl-diphosphatase (Nocardioides sp. (strain ATCC BAA-499 / JS614)).